Here is a 528-residue protein sequence, read N- to C-terminus: Na(+)/H(+) antiporter NhaB (528 aa).

11 consecutive transmembrane segments (helical) span residues 23-45 (FAIL…VAGW), 66-86 (PGGL…SQVL), 95-115 (VLLL…LLLF), 139-159 (AFLS…AVAV), 203-223 (LLMH…VGEP), 241-261 (LRMS…CFLV), 310-330 (LIIG…SVII), 349-369 (EEAL…GVII), 390-410 (LVIF…VFVG), 448-468 (ATPN…APLI), and 476-496 (VWMA…AIQF).

The protein belongs to the NhaB Na(+)/H(+) (TC 2.A.34) antiporter family.

It is found in the cell inner membrane. It carries out the reaction 2 Na(+)(in) + 3 H(+)(out) = 2 Na(+)(out) + 3 H(+)(in). Na(+)/H(+) antiporter that extrudes sodium in exchange for external protons. The protein is Na(+)/H(+) antiporter NhaB of Shewanella piezotolerans (strain WP3 / JCM 13877).